The sequence spans 912 residues: Coatomer subunit beta (912 aa).

10 HEAT repeats span residues 59–96 (PIPQLLMPIILYVMPSNDHTIKKLLLIYWEVIEKTHLG), 100–135 (SEMILVCNSLLNDLNHPNEFVRGSTLRFLCKLREAE), 136–172 (VLEPLVPSVRSNLENRHAYCRRNAVLAIYNIYSHFDY), 244–281 (SERSKYIKCIFTLLNSSSPAVKYESAGTLLSLSSAPTA), 300–337 (NVKMIVLDKLIEIKKNHSKIMEELVMDILRALSSPNID), 339–375 (CKKVLNIVLDSVTPKNIDEIILFLKKEINKTQSKEFD), 397–434 (EVLGNVVPLLMEYLGDSYLPSAVDVVIFLREVVETYPS), 441–479 (KKLIENLSSIKVSKVYRVAVWVIAEYVTCLEDLQYAMTS), 550–575 (LKAQVMMIISVLINLSKASQVSTSKS), and 576–612 (AYERMLSCIQVLIDSNATIKKIWLQDCRDSFANYLKY).

As to quaternary structure, oligomeric complex that consists of at least the alpha, beta, beta', gamma, delta, epsilon and zeta subunits.

The protein localises to the cytoplasm. It is found in the golgi apparatus membrane. Its subcellular location is the cytoplasmic vesicle. It localises to the COPI-coated vesicle membrane. Its function is as follows. The coatomer is a cytosolic protein complex that binds to dilysine motifs and reversibly associates with Golgi non-clathrin-coated vesicles, which further mediate biosynthetic protein transport from the ER, via the Golgi up to the trans Golgi network. Coatomer complex is required for budding from Golgi membranes, and is essential for the retrograde Golgi-to-ER transport of dilysine-tagged proteins. This Dictyostelium discoideum (Social amoeba) protein is Coatomer subunit beta (copb).